The sequence spans 144 residues: 3-hydroxyacyl-[acyl-carrier-protein] dehydratase FabZ (144 aa).

The active site involves His-48.

Belongs to the thioester dehydratase family. FabZ subfamily.

The protein localises to the cytoplasm. It carries out the reaction a (3R)-hydroxyacyl-[ACP] = a (2E)-enoyl-[ACP] + H2O. Involved in unsaturated fatty acids biosynthesis. Catalyzes the dehydration of short chain beta-hydroxyacyl-ACPs and long chain saturated and unsaturated beta-hydroxyacyl-ACPs. This is 3-hydroxyacyl-[acyl-carrier-protein] dehydratase FabZ from Listeria welshimeri serovar 6b (strain ATCC 35897 / DSM 20650 / CCUG 15529 / CIP 8149 / NCTC 11857 / SLCC 5334 / V8).